The primary structure comprises 388 residues: Staphopain A (388 aa).

A signal peptide spans 1 to 25 (MKRNFPKLIALSLIFSLSVTPIANA). Positions 26 to 214 (ESNSNIKAKD…TSQFKSNNYT (189 aa)) are excised as a propeptide. Residues Cys-238, His-334, and Asn-355 contribute to the active site.

The protein belongs to the peptidase C47 family. As to quaternary structure, in the cytoplasm, prematurely activated/folded ScpA forms a stable non-covalent complex with ScpB. Post-translationally, cleavage leads to the activation of ScpA probably by an auto-catalytic manner.

The protein localises to the secreted. The enzyme catalyses Broad endopeptidase action on proteins including elastin, but rather limited hydrolysis of small-molecule substrates. Assays are conveniently made with hemoglobin, casein or Z-Phe-Arg-NHMec as substrate.. Its activity is regulated as follows. Prematurely activated/folded staphopain A is inhibited by staphostatin A (ScpB), which is probably required to protect staphylococcal cytoplasmic proteins from degradation by ScpA. Functionally, cysteine protease that plays an important role in the inhibition of host innate immune response. Cleaves host elastins found in connective tissues, pulmonary surfactant protein A in the lungs, and the chemokine receptor CXCR2 on leukocytes. Proteolytic cleavage of surfactant protein A impairs bacterial phagocytosis by neutrophils while CXCR2 degradation blocks neutrophil activation and chemotaxis. Additionally, promotes vascular leakage by activating the plasma kallikerin/kinin system, resulting in hypotension. In Staphylococcus aureus (strain Mu50 / ATCC 700699), this protein is Staphopain A (sspP).